The sequence spans 357 residues: sn-glycerol-3-phosphate import ATP-binding protein UgpC (357 aa).

Positions Leu-4–Ile-235 constitute an ABC transporter domain. ATP is bound at residue Gly-37–Ser-44.

Belongs to the ABC transporter superfamily. sn-glycerol-3-phosphate importer (TC 3.A.1.1.3) family. As to quaternary structure, the complex is composed of two ATP-binding proteins (UgpC), two transmembrane proteins (UgpA and UgpE) and a solute-binding protein (UgpB).

The protein resides in the cell inner membrane. It carries out the reaction sn-glycerol 3-phosphate(out) + ATP + H2O = sn-glycerol 3-phosphate(in) + ADP + phosphate + H(+). Functionally, part of the ABC transporter complex UgpBAEC involved in sn-glycerol-3-phosphate (G3P) import. Responsible for energy coupling to the transport system. The chain is sn-glycerol-3-phosphate import ATP-binding protein UgpC from Yersinia pestis bv. Antiqua (strain Antiqua).